Reading from the N-terminus, the 72-residue chain is MSCCGGSCGCGSGCKCGSGCGGCGMYPDMEKSTTFTIIEGVAPINNYGNVEEKAAGEGCKCGSNCTCDPCNC.

This sequence belongs to the metallothionein superfamily. Type 15 family. Leaves and roots.

In terms of biological role, metallothioneins have a high content of cysteine residues that bind various heavy metals. The protein is Metallothionein-like protein type 2 A (MTA) of Solanum lycopersicum (Tomato).